A 1363-amino-acid chain; its full sequence is Clustered mitochondria protein homolog (1363 aa).

2 TPR repeats span residues 29 to 63 (LPSF…IVLC) and 120 to 154 (KEKS…DIGS). Residues 172–191 (KEAKKEESTEKEQQEKEELS) are disordered. One copy of the TPR 3 repeat lies at 283–316 (STINFNPTIKINEKGKFNKSYLLYDLVCQLSPLF). In terms of domain architecture, Clu spans 361 to 631 (DLSRSQLSSL…RTTPRDIEFI (271 aa)). The segment at 521 to 544 (PVITSPTTDAEGKNEAEEPESEPV) is disordered. Residues 548–581 (VYGLSSDGSRILEDKSFEEPLKQIGDFFHLKPHK) form a TPR 4 repeat. Residues 799-832 (AKAEKKREEEKEKEEKEATESEDKKEKKEDKEDA) are compositionally biased toward basic and acidic residues. The tract at residues 799–844 (AKAEKKREEEKEKEEKEATESEDKKEKKEDKEDAEKEEAEAEEEVP) is disordered. Residues 833–842 (EKEEAEAEEE) show a composition bias toward acidic residues. TPR repeat units follow at residues 1057 to 1090 (VEEI…NESI), 1141 to 1174 (ITAY…WSLV), 1183 to 1216 (INTL…TKKL), and 1225 to 1258 (GFIY…FMKL). Residues 1291 to 1363 (QQETQKKSKT…SGSKKSNKKK (73 aa)) form a disordered region. Positions 1330–1342 (PPQSNPEIANQSI) are enriched in polar residues.

It belongs to the CLU family. In terms of assembly, may associate with the eukaryotic translation initiation factor 3 (eIF-3) complex.

It localises to the cytoplasm. In terms of biological role, mRNA-binding protein involved in proper cytoplasmic distribution of mitochondria. This chain is Clustered mitochondria protein homolog, found in Candida albicans (strain SC5314 / ATCC MYA-2876) (Yeast).